The sequence spans 584 residues: Optineurin (584 aa).

The segment at 1–32 is disordered; that stretch reads MSHQPLSCLTEKGDSPCETPGNGPSNMVHPSL. The stretch at 38-180 forms a coiled coil; it reads EELLQQMKEL…VSELQLKLNS (143 aa). The interaction with Rab8 stretch occupies residues 58–219; that stretch reads MKLNNQAMKG…TPTRTDPISL (162 aa). The short motif at 186–191 is the LIR element; it reads DSFVEI. The residue at position 187 (S187) is a Phosphoserine. Coiled-coil stretches lie at residues 243–278 and 307–511; these read CLREGNQKVERLEVALREAKERISDFEKKANGHSST and IQVT…DIEE. Over residues 267–295 the composition is skewed to basic and acidic residues; that stretch reads DFEKKANGHSSTEKQTARRADREKEDKGQ. The segment at 267 to 302 is disordered; sequence DFEKKANGHSSTEKQTARRADREKEDKGQESVGSEV. Position 345 is a phosphoserine (S345). Residues 414–584 are interaction with HD; that stretch reads TKQQAEKVDK…LQIHVMDCII (171 aa). Positions 415-524 are interaction with MYO6; it reads KQQAEKVDKM…RQSLMEMQCR (110 aa). Positions 477 to 482 match the UBAN motif; that stretch reads DFHAER. At S530 the chain carries Phosphoserine. A CCHC NOA-type zinc finger spans residues 554 to 584; sequence PRSIPIHSCPKCGEVLPDIDTLQIHVMDCII. Residues C562, C565, H578, and C582 each coordinate Zn(2+).

In terms of assembly, self-associates. Interacts with HD, GTF3A, TRAF3, TBK1 and MYO6. Interacts (via UBAN) with ubiquitinated TFRC. Interacts with active GTP-bound Rab8 (RAB8A and/or RAB8B). Interacts with TBC1D17. Binds to linear ubiquitin chains. Interacts with LC3 family members MAP1LC3A, MAP1LC3B, GABARAP, GABARAPL1 and GABARAPL2; OPTN phosphorylation increases the association (at least with MAP1LC3B). Interacts with RAB12; the interaction may be indirect. Interacts with TBK1; this interaction leads to the Golgi localization of TBK1 and its subsequent activation. Interacts with palmitoyltransferase ZDHHC17/HIP14; the interaction does not lead to palmitoylation of OPTN. Interacts with CYLD. Interacts with TOM1; the interaction is indirect and is mediated by MYO6, which acts as a bridge between TOM1 and OPTN. Interacts with USP12; the interaction is independent of USP12 deubiquitinase activity and may be involved in regulation of autophagic flux. In terms of processing, phosphorylated by TBK1, leading to restrict bacterial proliferation in case of infection. As to expression, in eye, it is expressed in anterior segment, retina, and optic nerve blood vessels (at protein level). Highly expressed in adult liver, heart and testis.

The protein localises to the cytoplasm. It localises to the perinuclear region. It is found in the golgi apparatus. The protein resides in the trans-Golgi network. Its subcellular location is the cytoplasmic vesicle. The protein localises to the autophagosome. It localises to the recycling endosome. In terms of biological role, plays an important role in the maintenance of the Golgi complex, in membrane trafficking, in exocytosis, through its interaction with myosin VI and Rab8. Links myosin VI to the Golgi complex and plays an important role in Golgi ribbon formation. Plays a role in the activation of innate immune response during viral infection. Mechanistically, recruits TBK1 at the Golgi apparatus, promoting its trans-phosphorylation after RLR or TLR3 stimulation. In turn, activated TBK1 phosphorylates its downstream partner IRF3 to produce IFN-beta. Plays a neuroprotective role in the eye and optic nerve. May act by regulating membrane trafficking and cellular morphogenesis via a complex that contains Rab8 and huntingtin (HD). Mediates the interaction of Rab8 with the probable GTPase-activating protein TBC1D17 during Rab8-mediated endocytic trafficking, such as that of transferrin receptor (TFRC/TfR); regulates Rab8 recruitment to tubules emanating from the endocytic recycling compartment. Autophagy receptor that interacts directly with both the cargo to become degraded and an autophagy modifier of the MAP1 LC3 family; targets ubiquitin-coated bacteria (xenophagy), such as cytoplasmic Salmonella enterica, and appears to function in the same pathway as SQSTM1 and CALCOCO2/NDP52. The chain is Optineurin (Optn) from Mus musculus (Mouse).